We begin with the raw amino-acid sequence, 525 residues long: Neuropilin and tolloid-like protein 2 (525 aa).

Positions 1–22 (MALEQLCAVLKVLLITVLVVEG) are cleaved as a signal peptide. The Extracellular segment spans residues 23 to 347 (IAVAQKTQDG…GLFEQITKTH (325 aa)). Cystine bridges form between Cys45–Cys72, Cys100–Cys122, Cys177–Cys207, Cys234–Cys256, Cys297–Cys309, Cys304–Cys322, and Cys316–Cys331. CUB domains follow at residues 45–159 (CGIW…YSFI) and 177–292 (CQFE…FTSF). One can recognise an LDL-receptor class A domain in the interval 296–332 (PCTSSTFFCHSNMCINNSLVCNGVQNCAYPWDENHCK). Asn311 is a glycosylation site (N-linked (GlcNAc...) asparagine). Residues 348-368 (GTIIGITSGIVLVLLIISILV) form a helical membrane-spanning segment. Residues 369–525 (QVKQPRKKVM…SAQASISIDF (157 aa)) lie on the Cytoplasmic side of the membrane. Residue Ser409 is modified to Phosphoserine.

Interacts with GRIK2 and GRIK3, but neither with AMPA-nor with NMDA-sensitive glutamate receptors. Post-translationally, N-glycosylated. Expressed in brain tissues, including cerebellar granule cells (at protein level).

The protein localises to the cell membrane. Functionally, accessory subunit of neuronal kainate-sensitive glutamate receptors, GRIK2 and GRIK3. Increases kainate-receptor channel activity, slowing the decay kinetics of the receptors, without affecting their expression at the cell surface, and increasing the open probability of the receptor channels. Modulates the agonist sensitivity of kainate receptors. Slows the decay of kainate receptor-mediated excitatory postsynaptic currents (EPSCs), thus directly influencing synaptic transmission. The sequence is that of Neuropilin and tolloid-like protein 2 (Neto2) from Mus musculus (Mouse).